The primary structure comprises 259 residues: Trans-4-hydroxycyclohexanecarboxylate dehydrogenase (259 aa).

NAD(+) contacts are provided by arginine 20, methionine 22, aspartate 41, aspartate 73, valine 74, asparagine 100, tyrosine 164, lysine 168, valine 197, threonine 199, and threonine 202. Tyrosine 164 acts as the Proton acceptor in catalysis.

This sequence belongs to the short-chain dehydrogenases/reductases (SDR) family. Homodimer. Homotetramer.

The enzyme catalyses trans-4-hydroxycyclohexane-1-carboxylate + NAD(+) = 4-oxocyclohexane-1-carboxylate + NADH + H(+). With respect to regulation, strongly inhibited by N-bromosuccinimide. Not inhibited by sulfhydryl reagents, such as iodoacetic acid, iodoacetamide, N-ethylmaleimide and p-hydroxymercuribenzoic acid. Dehydrogenase involved in a cyclohexanecarboxylate (CHCA) degradation pathway. Catalyzes the NAD(+)-dependent dehydrogenation of trans-4-hydroxycyclohexanecarboxylate (trans-4-hydroxyCHCA) to form 4-oxocyclohexanecarboxylate (4-oxoCHCA). Is highly specific for the trans-4-hydroxy derivative and shows only weak activity with cis-4-hydroxyCHCA. Can also catalyze the reverse reaction (4-oxoCHCA reduction) with a higher catalytic efficiency. In the reverse reaction, is highly specific for 4-oxoCHCA and cannot use either the 2-oxo or the 3-oxo homolog as substrate. Cannot use NADP(+). This Sinomonas cyclohexanicum (Corynebacterium cyclohexanicum) protein is Trans-4-hydroxycyclohexanecarboxylate dehydrogenase.